Reading from the N-terminus, the 321-residue chain is Mas-related G-protein coupled receptor member D (321 aa).

Residues 1-8 are Extracellular-facing; sequence MNSTLDSS. Residue Asn-2 is glycosylated (N-linked (GlcNAc...) asparagine). The chain crosses the membrane as a helical span at residues 9 to 29; the sequence is PAPGLTISPTMDLVTWIYFSV. Thr-30 is a topological domain (cytoplasmic). A helical membrane pass occupies residues 31-51; sequence FLAMATCVGGMAGNSLVIWLL. The Extracellular segment spans residues 52 to 72; it reads SCNGMQRSPFCVYVLNLAVAD. The helical transmembrane segment at 73–93 threads the bilayer; sequence FLFLFCMASMLSLETGPLLIV. Topologically, residues 94–146 are cytoplasmic; sequence NISAKIYEGMRRIKYFAYTAGLSLLTAISTQRCLSVLFPIWYKCHRPRHLSSV. Residues 147–167 form a helical membrane-spanning segment; sequence VSGALWALAFLMNFLASFFCV. Residues 168-181 are Extracellular-facing; the sequence is QFWHPNKHQCFKVD. The chain crosses the membrane as a helical span at residues 182 to 202; that stretch reads IVFNSLILGIFMPVMILTSTI. Residues 203 to 220 lie on the Cytoplasmic side of the membrane; sequence LFIRVRKNSLMQRRRPRR. Residues 221–241 traverse the membrane as a helical segment; that stretch reads LYVVILTSILVFLTCSLPLGI. Topologically, residues 242-260 are extracellular; sequence NWFLLYWVDVKRDVRLLYS. The helical transmembrane segment at 261–281 threads the bilayer; that stretch reads CVSRFSSSLSSSANPVIYFLV. The Cytoplasmic segment spans residues 282-321; the sequence is GSQKSHRLQESLGAVLGRALRDEPEPEGRETPSTCTNDGV. The span at 302 to 311 shows a compositional bias: basic and acidic residues; it reads RDEPEPEGRE. Positions 302 to 321 are disordered; sequence RDEPEPEGRETPSTCTNDGV. Polar residues predominate over residues 312–321; sequence TPSTCTNDGV.

It belongs to the G-protein coupled receptor 1 family. Mas subfamily. As to expression, expressed in a subset of sensory neurons that includes nociceptors. Expressed in the subclass of non-peptidergic sensory neurons that are IB4(+) and VR1(-).

It localises to the cell membrane. May regulate nociceptor function and/or development, including the sensation or modulation of pain. Functions as a specific membrane receptor for beta-alanine. The receptor couples with G-protein G(q) and G(i). In Mus musculus (Mouse), this protein is Mas-related G-protein coupled receptor member D (Mrgprd).